The primary structure comprises 344 residues: Arginine N-succinyltransferase (344 aa).

Residue Leu-125 coordinates succinyl-CoA. The active-site Proton donor is the His-229.

It belongs to the arginine N-succinyltransferase family.

It carries out the reaction succinyl-CoA + L-arginine = N(2)-succinyl-L-arginine + CoA + H(+). Its pathway is amino-acid degradation; L-arginine degradation via AST pathway; L-glutamate and succinate from L-arginine: step 1/5. Catalyzes the transfer of succinyl-CoA to arginine to produce N(2)-succinylarginine. The chain is Arginine N-succinyltransferase from Escherichia fergusonii (strain ATCC 35469 / DSM 13698 / CCUG 18766 / IAM 14443 / JCM 21226 / LMG 7866 / NBRC 102419 / NCTC 12128 / CDC 0568-73).